The chain runs to 148 residues: Cytochrome c6, chloroplastic (148 aa).

The N-terminal 58 residues, 1–58 (MLQLANRSVRAKAARASQSARSVSCAAAKRGADVAPLTSALAVTASILLTTGAASASA), are a transit peptide targeting the chloroplast. Residues cysteine 72, cysteine 75, histidine 76, and methionine 118 each contribute to the heme c site.

Belongs to the cytochrome c family. PetJ subfamily. As to quaternary structure, thought to function as a monomer, however 2 crystal forms are observed; a homodimer and homotrimer, suggesting the protein oligomerizes. Binds 1 heme c group covalently per subunit.

It localises to the plastid. Its subcellular location is the chloroplast thylakoid lumen. Its function is as follows. Functions as an electron carrier between membrane-bound cytochrome b6-f and photosystem I in oxygenic photosynthesis. The chain is Cytochrome c6, chloroplastic (petJ) from Chlamydomonas reinhardtii (Chlamydomonas smithii).